The sequence spans 583 residues: MSTSTAKRPFDNKRAGSPDDGTDSDSGGNNSGSSPASKRRERKPGRKPLETEAKDKRTAQNRAAQRAFRERRERKMKELEDKVSQLESLNKQSELETKFLRNQVTNLLSELKRYNPELPKKRDSILLDYLAKQRKASIDSNPDFSAAANKAANSKDSSTAISSSNFQFEFPWKMDPSKIPSPSSDSTSPSASTSILDNANNKSVSSTNLNHSRSSISNSSSSPSNVNGLSSRKHSNTLNLYQTQSNVTSEFDFDSQFDESVSSFCSKLSMACGTKSNPIPKASPVSTPSSSDLLKPKSNSNVNITNHNNNKINSKDLSSSAPLHDSASASALNNHDSVNAVSNQFSVDKQYNDSSHSQATPNGLDNDSSVSAWQQPSFGQLGFRTDQLFDLDLDSASPITKQKDNNYSTTTNNTNSPAKADGMYWNFNTPLSNMVSRNMQNPEIPFIDTGLAFPDYDDPLLDILKEEQENEQVEGDSDPIQALINEEPSMPLCHDPAANAGASVSETDKLSNQEEIVQDIIPSNDGKLLKCSEVWDRITAHPRYSDLDIDGLCLELRTKAKCSEKGVVVNAEDVQKALISHMQ.

Positions M1–L86 are disordered. Residues R8 to S17 show a composition bias toward basic and acidic residues. Residues S24–A36 show a composition bias toward low complexity. Basic residues predominate over residues S37 to R46. The short motif at E41–P48 is the Bipartite nuclear localization signal element. 2 stretches are compositionally biased toward basic and acidic residues: residues K47 to T58 and A67 to S84. Positions T51–Y114 constitute a bZIP domain. The tract at residues K54 to K77 is basic motif. The leucine-zipper stretch occupies residues L79 to L86. The short motif at K120–L127 is the Bipartite nuclear localization signal element. The span at S177–I195 shows a compositional bias: low complexity. The segment at S177–K233 is disordered. Residues L196–T207 are compositionally biased toward polar residues. A compositionally biased stretch (low complexity) spans N208 to S230. The segment at C265–C272 is n-CRD. 2 disulfides stabilise this stretch: C265–C531 and C272–C562. Disordered regions lie at residues K275–A329 and Q350–W373. Low complexity predominate over residues K297–I312. Polar residues predominate over residues D316 to A329. Positions C531–C562 are c-CRD. Residues L547–L554 carry the Nuclear export signal motif.

Belongs to the bZIP family. YAP subfamily. Oxidative stress induces conformational changes through oxidation of cysteine residues, masking the nuclear export signal, thus abolishing nuclear export by CRM1/exportin 1.

It is found in the nucleus. It localises to the cytoplasm. Its function is as follows. Transcription activator involved in oxidative stress response and cadmium resistance. Regulates the transcription of genes encoding antioxidant enzymes and components of the cellular thiol-reducing pathways. Activity of the transcription factor is controlled through oxidation of specific cysteine residues resulting in the alteration of its subcellular location. Activation by alkyl hydroperoxides or cadmium induces nuclear accumulation and as a result YAP1 transcriptional activity. The polypeptide is AP-1-like transcription factor YAP1 (YAP1) (Kluyveromyces lactis (strain ATCC 8585 / CBS 2359 / DSM 70799 / NBRC 1267 / NRRL Y-1140 / WM37) (Yeast)).